Here is a 284-residue protein sequence, read N- to C-terminus: Tryptophan synthase alpha chain (284 aa).

Active-site proton acceptor residues include Glu55 and Asp66.

This sequence belongs to the TrpA family. As to quaternary structure, tetramer of two alpha and two beta chains.

The catalysed reaction is (1S,2R)-1-C-(indol-3-yl)glycerol 3-phosphate + L-serine = D-glyceraldehyde 3-phosphate + L-tryptophan + H2O. It participates in amino-acid biosynthesis; L-tryptophan biosynthesis; L-tryptophan from chorismate: step 5/5. Its function is as follows. The alpha subunit is responsible for the aldol cleavage of indoleglycerol phosphate to indole and glyceraldehyde 3-phosphate. This Methanococcus voltae protein is Tryptophan synthase alpha chain.